Consider the following 153-residue polypeptide: Regulatory protein RecX (153 aa).

The protein belongs to the RecX family.

It is found in the cytoplasm. In terms of biological role, modulates RecA activity. The protein is Regulatory protein RecX of Neisseria gonorrhoeae (strain ATCC 700825 / FA 1090).